Here is an 86-residue protein sequence, read N- to C-terminus: MAQKKGGGSTRNGRDSESKRLGVKVFGGQAINAGGIIIRQRGTRVHAGDNVGVGKDHTLFALVDGHVQFAVKGPAKKQQVSVVPAA.

Residues 1-10 (MAQKKGGGST) are compositionally biased toward gly residues. The segment at 1-21 (MAQKKGGGSTRNGRDSESKRL) is disordered.

The protein belongs to the bacterial ribosomal protein bL27 family.

In Cupriavidus necator (strain ATCC 17699 / DSM 428 / KCTC 22496 / NCIMB 10442 / H16 / Stanier 337) (Ralstonia eutropha), this protein is Large ribosomal subunit protein bL27.